Here is a 270-residue protein sequence, read N- to C-terminus: Probable septum site-determining protein MinC (270 aa).

It belongs to the MinC family. Interacts with MinD and FtsZ.

Functionally, cell division inhibitor that blocks the formation of polar Z ring septums. Rapidly oscillates between the poles of the cell to destabilize FtsZ filaments that have formed before they mature into polar Z rings. Prevents FtsZ polymerization. The protein is Probable septum site-determining protein MinC of Cupriavidus necator (strain ATCC 17699 / DSM 428 / KCTC 22496 / NCIMB 10442 / H16 / Stanier 337) (Ralstonia eutropha).